A 147-amino-acid polypeptide reads, in one-letter code: NADH-quinone oxidoreductase subunit A (147 aa).

3 helical membrane-spanning segments follow: residues 13 to 33 (LFSYAVAIVVLLAAMLGLGAV), 70 to 90 (YLVAMLFVIFDVESVFLFSWA), and 104 to 124 (VVVFVASLAAALAYVWRWGAL).

Belongs to the complex I subunit 3 family. In terms of assembly, NDH-1 is composed of 14 different subunits. Subunits NuoA, H, J, K, L, M, N constitute the membrane sector of the complex.

It localises to the cell inner membrane. The catalysed reaction is a quinone + NADH + 5 H(+)(in) = a quinol + NAD(+) + 4 H(+)(out). In terms of biological role, NDH-1 shuttles electrons from NADH, via FMN and iron-sulfur (Fe-S) centers, to quinones in the respiratory chain. The immediate electron acceptor for the enzyme in this species is believed to be ubiquinone. Couples the redox reaction to proton translocation (for every two electrons transferred, four hydrogen ions are translocated across the cytoplasmic membrane), and thus conserves the redox energy in a proton gradient. The chain is NADH-quinone oxidoreductase subunit A from Gluconacetobacter diazotrophicus (strain ATCC 49037 / DSM 5601 / CCUG 37298 / CIP 103539 / LMG 7603 / PAl5).